Reading from the N-terminus, the 1249-residue chain is MAGE-like protein 2 (1249 aa).

Positions 1–10 (MSQLSKNLGD) are enriched in polar residues. Disordered regions lie at residues 1–50 (MSQL…PPID), 134–233 (APGA…AQPP), 300–327 (QPPA…QPMA), 349–378 (PQVP…WQAT), 410–433 (RQGP…VRQA), 515–569 (QALP…LPAP), 647–679 (QPFQ…EVPT), 714–746 (LMTP…RAPS), 862–910 (PQAT…DWQG), and 930–957 (VSGD…ILSG). Composition is skewed to pro residues over residues 40–49 (PPVPWDPPPI) and 140–233 (AHPP…AQPP). The segment covering 301–311 (PPASGAPMAQP) has biased composition (low complexity). 2 stretches are compositionally biased toward pro residues: residues 312–324 (AAPP…PPAQ) and 349–358 (PQVPQGPQAP). A compositionally biased stretch (polar residues) spans 369 to 378 (QATSPGWQAT). The segment covering 410-432 (RQGPPPIRPGPPPIRPGPPPVRQ) has biased composition (pro residues). The span at 525–552 (QAPQARLPAPQVQAAPQVPTAPPATQVP) shows a compositional bias: low complexity. A compositionally biased stretch (pro residues) spans 553–567 (AAPPAGPQVPQPVLP). Low complexity predominate over residues 662-675 (QLPPQQAQASGPQA). Residues 725–746 (SIDRRGSSKERRTSSKERRAPS) are compositionally biased toward basic and acidic residues. Over residues 862 to 871 (PQATATTQEA) the composition is skewed to low complexity. The segment covering 881–891 (RSGKATRKKKH) has biased composition (basic residues). An MAGE domain is found at 1020-1219 (LDERANALVQ…QSWPFHYLEA (200 aa)). Over residues 1226-1235 (EDTDEDEPDT) the composition is skewed to acidic residues. Residues 1226–1249 (EDTDEDEPDTGDSAHGPTSRPPPR) form a disordered region.

In terms of assembly, part of a complex consisting of MAGEL2, TRIM27 and USP7; directly interacts with USP7. Interacts with TRIM27. Interacts with VPS35; leading to recruitment at retromer-containing endosomes. Interacts with BMAL1 and PER2. As to expression, expressed in placenta, fetal and adult brain. Not detected in heart and small intestine, very low levels in fibroblasts. Not expressed in brain of a Prader-Willi patient.

It localises to the early endosome. It is found in the cytoplasm. The protein resides in the nucleus. Functionally, probably enhances ubiquitin ligase activity of RING-type zinc finger-containing E3 ubiquitin-protein ligases, possibly through recruitment and/or stabilization of the Ubl-conjugating enzyme (E2) at the E3:substrate complex. Acts as a regulator of retrograde transport via its interaction with VPS35. Recruited to retromer-containing endosomes and promotes the formation of 'Lys-63'-linked polyubiquitin chains at 'Lys-220' of WASHC1 together with TRIM27, leading to promote endosomal F-actin assembly. Regulates the circadian clock by repressing the transcriptional activator activity of the CLOCK-BMAL1 heterodimer. Significantly promotes the cytoplasmic accumulation of CLOCK. This is MAGE-like protein 2 (MAGEL2) from Homo sapiens (Human).